The primary structure comprises 251 residues: Aspartate/glutamate leucyltransferase (251 aa).

Belongs to the R-transferase family. Bpt subfamily.

It is found in the cytoplasm. It catalyses the reaction N-terminal L-glutamyl-[protein] + L-leucyl-tRNA(Leu) = N-terminal L-leucyl-L-glutamyl-[protein] + tRNA(Leu) + H(+). The catalysed reaction is N-terminal L-aspartyl-[protein] + L-leucyl-tRNA(Leu) = N-terminal L-leucyl-L-aspartyl-[protein] + tRNA(Leu) + H(+). Its function is as follows. Functions in the N-end rule pathway of protein degradation where it conjugates Leu from its aminoacyl-tRNA to the N-termini of proteins containing an N-terminal aspartate or glutamate. The protein is Aspartate/glutamate leucyltransferase of Xanthomonas euvesicatoria pv. vesicatoria (strain 85-10) (Xanthomonas campestris pv. vesicatoria).